Here is a 258-residue protein sequence, read N- to C-terminus: uncharacterized protein (258 aa).

N-linked (GlcNAc...) asparagine; by host glycosylation is found at Asn60, Asn104, and Asn113. A compositionally biased stretch (low complexity) spans 147–156 (TTRKPGQKTT). The disordered stretch occupies residues 147–183 (TTRKPGQKTTLSRLKTTPNKHTQHKRSTRRTSPRDYN). Residues 157 to 166 (LSRLKTTPNK) show a composition bias toward polar residues. Over residues 167 to 177 (HTQHKRSTRRT) the composition is skewed to basic residues. The N-linked (GlcNAc...) asparagine; by host glycan is linked to Asn183. The chain crosses the membrane as a helical span at residues 208–228 (AHSAWILIVIIIIIVVILFFF).

This sequence belongs to the RL11 family.

Its subcellular location is the membrane. This is an uncharacterized protein from Human cytomegalovirus (strain AD169) (HHV-5).